A 369-amino-acid polypeptide reads, in one-letter code: Carbamoyl phosphate synthase small chain (369 aa).

Residues 1-168 (MYGILVLEDG…KKVVKYPAKD (168 aa)) form a CPSase region. L-glutamine-binding residues include Ser45, Gly220, and Gly222. The Glutamine amidotransferase type-1 domain maps to 172-364 (SCVVIDCGVK…VALGMKFKQE (193 aa)). Residue Cys247 is the Nucleophile of the active site. Positions 248, 251, 289, 291, and 292 each coordinate L-glutamine. Active-site residues include His337 and Glu339.

It belongs to the CarA family. Composed of two chains; the small (or glutamine) chain promotes the hydrolysis of glutamine to ammonia, which is used by the large (or ammonia) chain to synthesize carbamoyl phosphate. Tetramer of heterodimers (alpha,beta)4.

The catalysed reaction is hydrogencarbonate + L-glutamine + 2 ATP + H2O = carbamoyl phosphate + L-glutamate + 2 ADP + phosphate + 2 H(+). The enzyme catalyses L-glutamine + H2O = L-glutamate + NH4(+). The protein operates within amino-acid biosynthesis; L-arginine biosynthesis; carbamoyl phosphate from bicarbonate: step 1/1. Its pathway is pyrimidine metabolism; UMP biosynthesis via de novo pathway; (S)-dihydroorotate from bicarbonate: step 1/3. Its function is as follows. Small subunit of the glutamine-dependent carbamoyl phosphate synthetase (CPSase). CPSase catalyzes the formation of carbamoyl phosphate from the ammonia moiety of glutamine, carbonate, and phosphate donated by ATP, constituting the first step of 2 biosynthetic pathways, one leading to arginine and/or urea and the other to pyrimidine nucleotides. The small subunit (glutamine amidotransferase) binds and cleaves glutamine to supply the large subunit with the substrate ammonia. The sequence is that of Carbamoyl phosphate synthase small chain from Methanococcus vannielii (strain ATCC 35089 / DSM 1224 / JCM 13029 / OCM 148 / SB).